The chain runs to 597 residues: MSNSYQTQGYTVNNAGRRLVVDPITRIEGHMRCEVNIDEQNIITNAVSCGTMFRGLEIILQGRDPRDAWAFVERICGVCTGVHALASVYAIEDAIGIKVPDNANIIRNIMLATLWCHDHLVHFYQLAGMDWIDVLNALKADPRATSQLAQSLSAWPMSSPGYFFDVQNRLKKFVDGGQLGIFRNGYWGHPQYKLSPEANLMGFAHYLEALDFQREIIKIHTVFGGKNPHPNWIVGGMPCAINIDQSGAVGAVDMERLNLVQSIITRTADFINNVMVPDALAIGQFNKPWSQIGTGLSDKCVLSYGAFPDIANDFSAKSLLMPGGAVINGDFNNVMPVDLADQQQIQEFVDHAWYRYPDDQLGRHPFEGITEPWYNPGDVKGSDTDIQQLNEQERYSWIKAPRWRGHAMEVGPLARTLIAYHKGDAATIESVDRMMSALKLPLSGMQSTLGRILCRAHEAQWAVSKLQYFFDKLMTNLKNGNLATANTEKWEPASWPQQCRGIGFTEAPRGALGHWASIRDQKIDVYQCVVPTTWNASPRDPEGQIGAYEAALMGTQMAIPDQPLEILRTLHSFDPCLACSTHVLGDDGSELIAVQVR.

Ni(2+) is bound by residues cysteine 76, cysteine 79, cysteine 576, and cysteine 579.

The protein belongs to the [NiFe]/[NiFeSe] hydrogenase large subunit family. As to quaternary structure, heterodimer of a large and a small subunit. It depends on Ni(2+) as a cofactor.

The protein resides in the cell membrane. The catalysed reaction is H2 + A = AH2. The protein is Hydrogenase-1 large chain (hyaB) of Citrobacter freundii.